The chain runs to 86 residues: Small ribosomal subunit protein uS17 (86 aa).

The protein belongs to the universal ribosomal protein uS17 family. In terms of assembly, part of the 30S ribosomal subunit.

Its function is as follows. One of the primary rRNA binding proteins, it binds specifically to the 5'-end of 16S ribosomal RNA. In Tropheryma whipplei (strain TW08/27) (Whipple's bacillus), this protein is Small ribosomal subunit protein uS17.